The chain runs to 192 residues: Phosphoheptose isomerase (192 aa).

An SIS domain is found at 37 to 192 (LADSFKAGGK…IQLIEKEMVK (156 aa)). A substrate-binding site is contributed by 52–54 (NGG). Zn(2+) is bound by residues histidine 61 and glutamate 65. Substrate contacts are provided by residues glutamate 65, 93–94 (ND), 119–121 (STS), serine 124, and glutamine 172. Glutamine 172 and histidine 180 together coordinate Zn(2+).

The protein belongs to the SIS family. GmhA subfamily. Homotetramer. Requires Zn(2+) as cofactor.

Its subcellular location is the cytoplasm. It carries out the reaction 2 D-sedoheptulose 7-phosphate = D-glycero-alpha-D-manno-heptose 7-phosphate + D-glycero-beta-D-manno-heptose 7-phosphate. It participates in carbohydrate biosynthesis; D-glycero-D-manno-heptose 7-phosphate biosynthesis; D-glycero-alpha-D-manno-heptose 7-phosphate and D-glycero-beta-D-manno-heptose 7-phosphate from sedoheptulose 7-phosphate: step 1/1. Functionally, catalyzes the isomerization of sedoheptulose 7-phosphate in D-glycero-D-manno-heptose 7-phosphate. This is Phosphoheptose isomerase from Shigella dysenteriae serotype 1 (strain Sd197).